The sequence spans 491 residues: Probable glycogen synthase 2 (491 aa).

Position 15 (K15) interacts with ADP-alpha-D-glucose.

Belongs to the glycosyltransferase 1 family. Bacterial/plant glycogen synthase subfamily.

The catalysed reaction is [(1-&gt;4)-alpha-D-glucosyl](n) + ADP-alpha-D-glucose = [(1-&gt;4)-alpha-D-glucosyl](n+1) + ADP + H(+). It participates in glycan biosynthesis; glycogen biosynthesis. Functionally, synthesizes alpha-1,4-glucan chains using ADP-glucose. The polypeptide is Probable glycogen synthase 2 (glgA2) (Synechocystis sp. (strain ATCC 27184 / PCC 6803 / Kazusa)).